A 608-amino-acid chain; its full sequence is tRNA (guanine(37)-N(1))-methyltransferase 1 (608 aa).

The segment at 207 to 229 (SRPKKKKRRKEEERSEGKKRTGK) is disordered. Basic and acidic residues predominate over residues 216–229 (KEEERSEGKKRTGK). Residues arginine 425, 463–464 (DL), 491–492 (DG), and asparagine 514 contribute to the S-adenosyl-L-methionine site.

Belongs to the class I-like SAM-binding methyltransferase superfamily. TRM5/TYW2 family. Monomer.

The protein resides in the mitochondrion matrix. It localises to the nucleus. Its subcellular location is the cytoplasm. The enzyme catalyses guanosine(37) in tRNA + S-adenosyl-L-methionine = N(1)-methylguanosine(37) in tRNA + S-adenosyl-L-homocysteine + H(+). Functionally, specifically methylates the N1 position of guanosine-37 in various cytoplasmic and mitochondrial tRNAs. Methylation is not dependent on the nature of the nucleoside 5' of the target nucleoside. This is the first step in the biosynthesis of wybutosine (yW), a modified base adjacent to the anticodon of tRNAs and required for accurate decoding. The protein is tRNA (guanine(37)-N(1))-methyltransferase 1 of Vitis vinifera (Grape).